We begin with the raw amino-acid sequence, 549 residues long: MARDATKLEATVAKLKKHWAESAPRDMRAAFSADPGRFGRYSLCLDDLLFDWSKCRVNDETMALLKELAVAADVEGRRAAMFAGEHINNTEDRAVLHVALRDTSSKEVLVDGHNVLPDVKHVLDRMAAFADGIRSGALKGATGRKITDIVNIGIGGSDLGPVMATLALAPYHDEPRAHFVSNIDGAHIADTLSPLDPASTLIIVASKTFTTIETMTNAQTARKWVADTLGEAAVGAHFAAVSTALDKVAAFGIPEDRVFGFWDWVGGRYSVWSAIGLPVMIAVGPDNFRKFLAGAHAMDVHFRDAPLEKNLPVMLGLIGYWHRAICGYGSRAIIPYDQRLSRLPAYLQQLDMESNGKSVTLDGKPVSGPTGPVVWGEPGTNGQHAFFQLLHQGTDTIPLEFIVAAKGHEPTLDHQHEMLMANCLAQSEALMKGRTLDEARAQLQAKNLPASQVERIAPHRVFSGNRPSLTLIHDMLDPYTLGRLIALYEHRVFVEAQIFGINAFDQWGVELGKELATELLPVVSGKEGASGRDASTQGLVAHLHARRKA.

Catalysis depends on Glu353, which acts as the Proton donor. Catalysis depends on residues His384 and Lys513.

The protein belongs to the GPI family.

It is found in the cytoplasm. The enzyme catalyses alpha-D-glucose 6-phosphate = beta-D-fructose 6-phosphate. It functions in the pathway carbohydrate biosynthesis; gluconeogenesis. Its pathway is carbohydrate degradation; glycolysis; D-glyceraldehyde 3-phosphate and glycerone phosphate from D-glucose: step 2/4. Catalyzes the reversible isomerization of glucose-6-phosphate to fructose-6-phosphate. The sequence is that of Glucose-6-phosphate isomerase from Brucella melitensis biotype 2 (strain ATCC 23457).